Consider the following 217-residue polypeptide: Somatotropin (217 aa).

An N-terminal signal peptide occupies residues 1–27 (MATGSHTATLLLAVALLGLPWPQEAGA). Histidine 46 is a binding site for Zn(2+). Cysteine 79 and cysteine 190 are joined by a disulfide. Position 132 is a phosphoserine (serine 132). Residue glutamate 199 coordinates Zn(2+). Residues cysteine 207 and cysteine 215 are joined by a disulfide bond.

It belongs to the somatotropin/prolactin family.

It is found in the secreted. In terms of biological role, plays an important role in growth control. Its major role in stimulating body growth is to stimulate the liver and other tissues to secrete IGF1. It stimulates both the differentiation and proliferation of myoblasts. It also stimulates amino acid uptake and protein synthesis in muscle and other tissues. This is Somatotropin (GH1) from Xanthonycticebus pygmaeus (Pygmy slow loris).